The primary structure comprises 92 residues: MATEQTILVGKKPTTNYVIATVMAFNAGVKKVVLKARGAAISKAVSTAVMVRDRFLPGKVQIKDIKLLSDKVQGQGGRERTVAAVEIVLEMA.

K11 is modified (N6-acetyllysine).

The protein belongs to the histone-like Alba family. Acetylated. Acetylation at Lys-11 decreases DNA-binding affinity.

The protein resides in the cytoplasm. It is found in the chromosome. Its function is as follows. Binds double-stranded DNA tightly but without sequence specificity. Involved in DNA compaction. The sequence is that of DNA/RNA-binding protein Alba from Pyrobaculum islandicum (strain DSM 4184 / JCM 9189 / GEO3).